Reading from the N-terminus, the 1381-residue chain is DNA-directed RNA polymerase subunit beta' (1381 aa).

Positions 70, 72, 85, and 88 each coordinate Zn(2+). The Mg(2+) site is built by Asp461, Asp463, and Asp465. Zn(2+)-binding residues include Cys801, Cys875, Cys882, and Cys885. The disordered stretch occupies residues 1362-1381 (VEIEGDENSNKKSLDMHAAN). Positions 1369 to 1381 (NSNKKSLDMHAAN) are enriched in basic and acidic residues.

This sequence belongs to the RNA polymerase beta' chain family. As to quaternary structure, the RNAP catalytic core consists of 2 alpha, 1 beta, 1 beta' and 1 omega subunit. When a sigma factor is associated with the core the holoenzyme is formed, which can initiate transcription. It depends on Mg(2+) as a cofactor. Zn(2+) is required as a cofactor.

It carries out the reaction RNA(n) + a ribonucleoside 5'-triphosphate = RNA(n+1) + diphosphate. DNA-dependent RNA polymerase catalyzes the transcription of DNA into RNA using the four ribonucleoside triphosphates as substrates. The sequence is that of DNA-directed RNA polymerase subunit beta' from Syntrophus aciditrophicus (strain SB).